The sequence spans 120 residues: Ribonuclease P protein component (120 aa).

The protein belongs to the RnpA family. In terms of assembly, consists of a catalytic RNA component (M1 or rnpB) and a protein subunit.

The catalysed reaction is Endonucleolytic cleavage of RNA, removing 5'-extranucleotides from tRNA precursor.. Functionally, RNaseP catalyzes the removal of the 5'-leader sequence from pre-tRNA to produce the mature 5'-terminus. It can also cleave other RNA substrates such as 4.5S RNA. The protein component plays an auxiliary but essential role in vivo by binding to the 5'-leader sequence and broadening the substrate specificity of the ribozyme. In Blochmanniella floridana, this protein is Ribonuclease P protein component.